A 462-amino-acid chain; its full sequence is Ribosomal protein uS12 methylthiotransferase RimO (462 aa).

Residues 22–133 enclose the MTTase N-terminal domain; the sequence is ASVAFLHLGC…IIEVLQRVRQ (112 aa). Residues Cys31, Cys67, Cys96, Cys171, Cys175, and Cys178 each contribute to the [4Fe-4S] cluster site. In terms of domain architecture, Radical SAM core spans 157 to 386; it reads TTGRFVSYLK…VAIQQPISAA (230 aa). Residues 389-460 form the TRAM domain; sequence QALIGQTVDV…LYDLTGEINH (72 aa).

The protein belongs to the methylthiotransferase family. RimO subfamily. It depends on [4Fe-4S] cluster as a cofactor.

The protein resides in the cytoplasm. The catalysed reaction is L-aspartate(89)-[ribosomal protein uS12]-hydrogen + (sulfur carrier)-SH + AH2 + 2 S-adenosyl-L-methionine = 3-methylsulfanyl-L-aspartate(89)-[ribosomal protein uS12]-hydrogen + (sulfur carrier)-H + 5'-deoxyadenosine + L-methionine + A + S-adenosyl-L-homocysteine + 2 H(+). Catalyzes the methylthiolation of an aspartic acid residue of ribosomal protein uS12. The sequence is that of Ribosomal protein uS12 methylthiotransferase RimO from Prochlorococcus marinus (strain MIT 9211).